A 564-amino-acid chain; its full sequence is Sulfite reductase [NADPH] hemoprotein beta-component 1 (564 aa).

[4Fe-4S] cluster is bound by residues Cys-426, Cys-432, Cys-471, and Cys-475. Position 475 (Cys-475) interacts with siroheme.

It belongs to the nitrite and sulfite reductase 4Fe-4S domain family. In terms of assembly, alpha(8)-beta(8). The alpha component is a flavoprotein, the beta component is a hemoprotein. It depends on siroheme as a cofactor. Requires [4Fe-4S] cluster as cofactor.

It carries out the reaction hydrogen sulfide + 3 NADP(+) + 3 H2O = sulfite + 3 NADPH + 4 H(+). Its pathway is sulfur metabolism; hydrogen sulfide biosynthesis; hydrogen sulfide from sulfite (NADPH route): step 1/1. In terms of biological role, component of the sulfite reductase complex that catalyzes the 6-electron reduction of sulfite to sulfide. This is one of several activities required for the biosynthesis of L-cysteine from sulfate. This is Sulfite reductase [NADPH] hemoprotein beta-component 1 from Pectobacterium carotovorum subsp. carotovorum (strain PC1).